We begin with the raw amino-acid sequence, 349 residues long: Anthranilate phosphoribosyltransferase (349 aa).

Residues glycine 82, 85 to 86 (GD), 92 to 95 (NVST), 110 to 118 (KHGNRGVSS), and serine 122 each bind 5-phospho-alpha-D-ribose 1-diphosphate. Position 82 (glycine 82) interacts with anthranilate. Serine 94 lines the Mg(2+) pocket. Asparagine 113 provides a ligand contact to anthranilate. Arginine 168 lines the anthranilate pocket. 2 residues coordinate Mg(2+): aspartate 227 and glutamate 228.

It belongs to the anthranilate phosphoribosyltransferase family. As to quaternary structure, homodimer. Mg(2+) serves as cofactor.

It catalyses the reaction N-(5-phospho-beta-D-ribosyl)anthranilate + diphosphate = 5-phospho-alpha-D-ribose 1-diphosphate + anthranilate. It functions in the pathway amino-acid biosynthesis; L-tryptophan biosynthesis; L-tryptophan from chorismate: step 2/5. In terms of biological role, catalyzes the transfer of the phosphoribosyl group of 5-phosphorylribose-1-pyrophosphate (PRPP) to anthranilate to yield N-(5'-phosphoribosyl)-anthranilate (PRA). The chain is Anthranilate phosphoribosyltransferase from Acinetobacter baumannii (strain SDF).